The following is a 475-amino-acid chain: Mitochondrial adenyl nucleotide antiporter SLC25A24 (475 aa).

The tract at residues 1–173 (MLRWLRAFVL…RFWKHSTGID (173 aa)) is regulatory N-terminal domain. The Mitochondrial intermembrane segment spans residues 1–197 (MLRWLRAFVL…EKKSGQWWRQ (197 aa)). 4 EF-hand domains span residues 19–54 (EPPT…LGIP), 55–88 (LGQD…KDHE), 86–121 (DHEK…LGLH), and 122–157 (ISEK…NPVT). Residues D32, N34, D36, V38, E43, D68, N70, D72, K74, E79, D99, N101, D103, K105, E110, D135, D137, T139, T141, and E146 each contribute to the Ca(2+) site. Residues 159 to 168 (IEEIIRFWKH) are linker region. The tract at residues 174-475 (IGDSLTIPDE…MKQTLGVAQK (302 aa)) is C-terminal transmembrane transporter domain. 3 Solcar repeats span residues 192-276 (GQWW…YKKL), 284-369 (LGTF…LKSY), and 381-469 (PGVM…MKQT). Residues 198–215 (LLAGGVAGAVSRTSTAPL) form a helical membrane-spanning segment. The Mitochondrial matrix segment spans residues 216–250 (DRLKVMMQVHGSKSMNIFGGFRQMVKEGGIRSLWR). Residues 251–270 (GNGTNVIKIAPETAVKFWAY) traverse the membrane as a helical segment. Topologically, residues 271–293 (EQYKKLLTEEGQKLGTFERFISG) are mitochondrial intermembrane. Residues 294–307 (SMAGATAQTFIYPM) traverse the membrane as a helical segment. Over 308–343 (EVLKTRLAVAKTGQYSGIYGCAKKILKHEGFGAFYK) the chain is Mitochondrial matrix. K318 bears the N6-acetyllysine; alternate mark. Residue K318 is modified to N6-succinyllysine; alternate. Residue K334 is modified to N6-acetyllysine. Residues 344–363 (GYIPNLLGIIPYAGIDLAVY) form a helical membrane-spanning segment. At 364 to 386 (ELLKSYWLDNFAKDSVNPGVMVL) the chain is on the mitochondrial intermembrane side. A helical transmembrane segment spans residues 387-404 (LSCGALSSTCGQLASYPL). Topologically, residues 405 to 443 (ALVRTRMQAQATVEGAPQLSMVGLFQRIVSKEGVSGLYR) are mitochondrial matrix. The residue at position 435 (K435) is an N6-acetyllysine; alternate. An N6-succinyllysine; alternate modification is found at K435. A helical membrane pass occupies residues 444-463 (GITPNFMKVLPAVGISYVVY). Residues 464 to 475 (ENMKQTLGVAQK) are Mitochondrial intermembrane-facing.

Belongs to the mitochondrial carrier (TC 2.A.29) family. In terms of assembly, monomer.

It is found in the mitochondrion inner membrane. The enzyme catalyses Mg(2+)(out) + phosphate(in) + ATP(out) = Mg(2+)(in) + phosphate(out) + ATP(in). It carries out the reaction ADP(out) + phosphate(in) + H(+)(out) = ADP(in) + phosphate(out) + H(+)(in). The catalysed reaction is AMP(out) + phosphate(in) = AMP(in) + phosphate(out). It catalyses the reaction phosphate(in) + ATP(out) + 2 H(+)(out) = phosphate(out) + ATP(in) + 2 H(+)(in). The enzyme catalyses dADP(in) + ADP(out) = dADP(out) + ADP(in). It carries out the reaction Mg(2+)(in) + ADP(out) + ATP(in) + H(+)(out) = Mg(2+)(out) + ADP(in) + ATP(out) + H(+)(in). The catalysed reaction is ADP(out) + diphosphate(in) = ADP(in) + diphosphate(out). It catalyses the reaction dAMP(in) + ADP(out) + H(+)(out) = dAMP(out) + ADP(in) + H(+)(in). The enzyme catalyses 3'-AMP(in) + ADP(out) + H(+)(out) = 3'-AMP(out) + ADP(in) + H(+)(in). It carries out the reaction dAMP(out) + phosphate(in) = dAMP(in) + phosphate(out). The catalysed reaction is 3'-AMP(out) + phosphate(in) = 3'-AMP(in) + phosphate(out). It catalyses the reaction dADP(out) + phosphate(in) + H(+)(out) = dADP(in) + phosphate(out) + H(+)(in). With respect to regulation, activated by an increase in cytosolic calcium levels that induce a conformational change of the N-terminal regulatory domain, uncapping the channel and allowing transport. Inhibited by bathophenanthroline, mersalyl, p-hydroxymercuribenzoate, bromcresol purple and tannic acid. In terms of biological role, electroneutral antiporter that mediates the transport of adenyl nucleotides through the inner mitochondrial membrane. Originally identified as an ATP-magnesium/inorganic phosphate antiporter, it also acts as a broad specificity adenyl nucleotide antiporter. By regulating the mitochondrial matrix adenyl nucleotide pool could adapt to changing cellular energetic demands and indirectly regulate adenyl nucleotide-dependent metabolic pathways. In vitro, a low activity is also observed with guanyl and pyrimidine nucleotides. May play a role in protecting cells against oxidative stress-induced cell death, by buffering calcium levels in the mitochondrial matrix through the formation of calcium-phosphate precipitates. In Mus musculus (Mouse), this protein is Mitochondrial adenyl nucleotide antiporter SLC25A24.